The primary structure comprises 370 residues: NSFL1 cofactor p47 (370 aa).

The span at 54–73 (SQATPSSVSRGTAPSDNRVT) shows a compositional bias: polar residues. The interval 54-116 (SQATPSSVSR…VGPPRKKSPN (63 aa)) is disordered. Ser74, Ser102, Ser114, and Ser140 each carry phosphoserine. Positions 109–115 (PPRKKSP) match the Nuclear localization signal motif. Phosphotyrosine is present on Tyr167. A Nuclear localization signal motif is present at residues 172–175 (KRQH). Phosphoserine occurs at positions 176, 192, and 272. In terms of domain architecture, SEP spans 179–244 (DVHVVLKLWK…MEDHRDEDFV (66 aa)). Residues 261–287 (GSTAPQVLSTSSPAQQAENEAKASSSI) are compositionally biased toward polar residues. Residues 261-289 (GSTAPQVLSTSSPAQQAENEAKASSSILI) are disordered. In terms of domain architecture, UBX spans 291 to 368 (ESEPTTNIQI…NLLNAVIVQR (78 aa)).

The protein belongs to the NSFL1C family. Part of a ternary complex containing STX5A, NSFL1C and VCP. NSFL1C forms a homotrimer that binds to one end of a VCP homohexamer. The complex binds to membranes enriched in phosphatidylethanolamine-containing lipids and promotes Golgi membrane fusion. Interaction with VCIP135 leads to dissociation of the complex via ATP hydrolysis by VCP. Binds ubiquitin and mono-ubiquitinated proteins via its N-terminal UBA-like domain when bound to VCP. Post-translationally, phosphorylated during mitosis. Phosphorylation inhibits interaction with Golgi membranes and is required for the fragmentation of the Golgi stacks during mitosis.

The protein resides in the nucleus. It localises to the golgi apparatus. It is found in the golgi stack. The protein localises to the chromosome. Its subcellular location is the cytoplasm. The protein resides in the cytoskeleton. It localises to the microtubule organizing center. It is found in the centrosome. Reduces the ATPase activity of VCP. Necessary for the fragmentation of Golgi stacks during mitosis and for VCP-mediated reassembly of Golgi stacks after mitosis. May play a role in VCP-mediated formation of transitional endoplasmic reticulum (tER). Inhibits the activity of CTSL (in vitro). Together with UBXN2B/p37, regulates the centrosomal levels of kinase AURKA/Aurora A during mitotic progression by promoting AURKA removal from centrosomes in prophase. Also, regulates spindle orientation during mitosis. This is NSFL1 cofactor p47 (NSFL1C) from Homo sapiens (Human).